The following is a 539-amino-acid chain: Sphingosine-1-phosphate lyase (539 aa).

The signal sequence occupies residues Met1–Ala46. The Lumenal segment spans residues Ala47–Arg54. Residues Thr55–Ile75 form a helical membrane-spanning segment. Topologically, residues Asn76 to Cys539 are cytoplasmic. Lys344 is subject to N6-(pyridoxal phosphate)lysine.

Belongs to the group II decarboxylase family. Sphingosine-1-phosphate lyase subfamily. Pyridoxal 5'-phosphate serves as cofactor.

Its subcellular location is the endoplasmic reticulum membrane. It catalyses the reaction sphinganine 1-phosphate = hexadecanal + phosphoethanolamine. Its pathway is lipid metabolism; sphingolipid metabolism. Functionally, cleaves phosphorylated sphingoid bases (PSBs), such as sphingosine-1-phosphate, into fatty aldehydes and phosphoethanolamine. Elevates stress-induced ceramide production and apoptosis. The chain is Sphingosine-1-phosphate lyase (SPL) from Oryza sativa subsp. japonica (Rice).